The chain runs to 481 residues: Beta-amyrin 28-monooxygenase (481 aa).

A helical membrane pass occupies residues 4–24 (FYVPLLSLFVLFISLSFHFLF). Cys428 provides a ligand contact to heme.

It belongs to the cytochrome P450 family. Heme serves as cofactor. Mostly expressed in roots, and, to a lower extent, in stems and leaves. Accumulates only in the rhizome of plants.

The protein resides in the membrane. It carries out the reaction beta-amyrin + 3 reduced [NADPH--hemoprotein reductase] + 3 O2 = oleanolate + 3 oxidized [NADPH--hemoprotein reductase] + 4 H2O + 4 H(+). It functions in the pathway secondary metabolite biosynthesis; terpenoid biosynthesis. In terms of biological role, component of the oleanane-type triterpene saponins (e.g. ginsenosides or panaxosides) biosynthetic pathway. Catalyzes the carboxylation of beta-amyrin at the C-28 position to form oleanolic acid during ginsenoside biosynthesis, a class of tetracyclic triterpenoid saponins. The chain is Beta-amyrin 28-monooxygenase from Panax ginseng (Korean ginseng).